The chain runs to 724 residues: Degenerin mec-10 (724 aa).

Over residues 1 to 15 (MNRNPRMSKFQPNPR) the composition is skewed to polar residues. A disordered region spans residues 1–22 (MNRNPRMSKFQPNPRSRSRFQD). The Cytoplasmic portion of the chain corresponds to 1 to 122 (MNRNPRMSKF…GQAPNSLYRA (122 aa)). A helical transmembrane segment spans residues 123–143 (AWVFLLLICAIQFINQAVAVI). The Extracellular portion of the chain corresponds to 144–684 (QKYQKMDKIT…FGGHLGLWSG (541 aa)). Residues 229–265 (KRGAGEKGTFEPANSACECDEEDGSNECEERSTEKPS) are disordered. The segment covering 246-255 (ECDEEDGSNE) has biased composition (acidic residues). The segment covering 256–265 (CEERSTEKPS) has biased composition (basic and acidic residues). N-linked (GlcNAc...) asparagine glycans are attached at residues asparagine 293, asparagine 369, asparagine 463, asparagine 605, and asparagine 624. A helical membrane pass occupies residues 685-705 (VSVMTCCEFVCLAFELIYMAI). The Cytoplasmic segment spans residues 706–724 (AHHINQQRIRRRENAANEY).

The protein belongs to the amiloride-sensitive sodium channel (TC 1.A.6) family. Component of a non-voltage-gated amiloride-sensitive cation channel complex (also called the degenerin channel complex) composed of at least the mec-2, mec-4, mec-6 and mec-10 subunits; the complex mediates mechanotransduction in touch cells. Interacts with mec-4 and mec-6.

It localises to the cell membrane. Functionally, subunit of an amiloride-sensitive cation channel (degenerin channel complex) permeable for sodium, potassium, lithium and N-methylglucamine, and required for mechanosensory transduction (touch sensitivity). Negatively regulates the turning step of male mating behavior. This chain is Degenerin mec-10, found in Caenorhabditis elegans.